A 563-amino-acid chain; its full sequence is Germacrene C/D synthase (563 aa).

The disordered stretch occupies residues 1-22 (MESCLSVSSAPPPKKNIQEPVR). Residues Asp-315, Asp-319, and Glu-468 each coordinate Mg(2+). The DDXXD motif signature appears at 315–319 (DDTYD).

Belongs to the terpene synthase family. The cofactor is Mg(2+). In terms of tissue distribution, predominantly expressed in root.

It catalyses the reaction (2E,6E)-farnesyl diphosphate = germacrene C + diphosphate. The enzyme catalyses (2E,6E)-farnesyl diphosphate = (-)-germacrene D + diphosphate. Functionally, mediates formation of germacrene C and germacrene D using farnesyl diphosphate as substrate. Can also catalyze formation of trace of germacrene B. This Valeriana officinalis (Valerian) protein is Germacrene C/D synthase (TPS1).